Here is a 229-residue protein sequence, read N- to C-terminus: Ribonuclease 3 (229 aa).

Residues 5 to 136 (LAELERALGI…VIGAIYLDQG (132 aa)) enclose the RNase III domain. E49 lines the Mg(2+) pocket. D53 is a catalytic residue. The Mg(2+) site is built by D122 and E125. E125 is a catalytic residue. Positions 161–229 (DPTTRLQEIV…AQAALADIDR (69 aa)) constitute a DRBM domain.

It belongs to the ribonuclease III family. As to quaternary structure, homodimer. Requires Mg(2+) as cofactor.

The protein resides in the cytoplasm. The enzyme catalyses Endonucleolytic cleavage to 5'-phosphomonoester.. In terms of biological role, digests double-stranded RNA. Involved in the processing of primary rRNA transcript to yield the immediate precursors to the large and small rRNAs (23S and 16S). Processes some mRNAs, and tRNAs when they are encoded in the rRNA operon. Processes pre-crRNA and tracrRNA of type II CRISPR loci if present in the organism. This chain is Ribonuclease 3, found in Chloroflexus aggregans (strain MD-66 / DSM 9485).